A 557-amino-acid chain; its full sequence is Phosphomethylpyrimidine synthase (557 aa).

Substrate is bound by residues Asn197, Met226, Tyr255, His291, 311-313, 352-355, and Glu391; these read SRG and DGLR. A Zn(2+)-binding site is contributed by His395. Residue Tyr418 participates in substrate binding. His459 provides a ligand contact to Zn(2+). The [4Fe-4S] cluster site is built by Cys539, Cys542, and Cys547.

The protein belongs to the ThiC family. In terms of assembly, homodimer. It depends on [4Fe-4S] cluster as a cofactor.

It carries out the reaction 5-amino-1-(5-phospho-beta-D-ribosyl)imidazole + S-adenosyl-L-methionine = 4-amino-2-methyl-5-(phosphooxymethyl)pyrimidine + CO + 5'-deoxyadenosine + formate + L-methionine + 3 H(+). It participates in cofactor biosynthesis; thiamine diphosphate biosynthesis. Functionally, catalyzes the synthesis of the hydroxymethylpyrimidine phosphate (HMP-P) moiety of thiamine from aminoimidazole ribotide (AIR) in a radical S-adenosyl-L-methionine (SAM)-dependent reaction. This is Phosphomethylpyrimidine synthase from Anaplasma phagocytophilum (strain HZ).